The chain runs to 1011 residues: Phosphoenolpyruvate carboxylase (1011 aa).

Active-site residues include His-207 and Lys-658.

It belongs to the PEPCase type 1 family. The cofactor is Mg(2+).

The enzyme catalyses oxaloacetate + phosphate = phosphoenolpyruvate + hydrogencarbonate. Functionally, forms oxaloacetate, a four-carbon dicarboxylic acid source for the tricarboxylic acid cycle. The chain is Phosphoenolpyruvate carboxylase (ppc) from Thermosynechococcus vestitus (strain NIES-2133 / IAM M-273 / BP-1).